The chain runs to 140 residues: MNLEALCKEAGLSFYDDELVSENGKKIYRVYVQKEGGVKLDDCARLSEILSPIFDVEPPVSGEYFLEVSSCGLERKLSKIEHFAKSINELVKITTSEKEKIEAKIVSVDDENITLENLKTQEKTTLKFSDIRKARTFVEW.

The protein belongs to the RimP family.

It localises to the cytoplasm. In terms of biological role, required for maturation of 30S ribosomal subunits. This is Ribosome maturation factor RimP from Campylobacter lari (strain RM2100 / D67 / ATCC BAA-1060).